The sequence spans 367 residues: Probable butyrate kinase (367 aa).

The protein belongs to the acetokinase family.

Its subcellular location is the cytoplasm. The enzyme catalyses butanoate + ATP = butanoyl phosphate + ADP. This Bacillus cytotoxicus (strain DSM 22905 / CIP 110041 / 391-98 / NVH 391-98) protein is Probable butyrate kinase.